The primary structure comprises 410 residues: D-amino acid dehydrogenase (410 aa).

9 to 14 contacts FAD; that stretch reads GGGIVG.

The protein belongs to the DadA oxidoreductase family. It depends on FAD as a cofactor.

It is found in the cell inner membrane. It carries out the reaction a D-alpha-amino acid + a quinone + H2O = a 2-oxocarboxylate + a quinol + NH4(+). In terms of biological role, catalyzes the oxidative deamination of D-amino acids. Has broad substrate specificity; is mostly active on D-proline, and to a lesser extent, on several other D-amino acids such as D-alanine, D-phenylalanine and D-serine. Mediates electron transport from D-proline to coenzyme Q1 in vitro, and is involved in the electron transport chain from D-proline to the c-type cytochrome in vivo. The polypeptide is D-amino acid dehydrogenase (Helicobacter pylori (strain J99 / ATCC 700824) (Campylobacter pylori J99)).